Reading from the N-terminus, the 251-residue chain is MSGHSKWATIKRKKAATDQKRGSLFTKLVKEITIAAKMGGGDPTGNPRLRLAIDTARANSMPMDNIQRAIKRGTGELEGATYEEITYEGYGPGGIAIIIETATDNRNRTVADIRHLMSRGGGSLGESGSVGWMFKRKGSIEVPRSAISEDDLMELLLDAGLEELESDDEQYFTVLTDVKDLEPVKKALEEAGIPFENAKIDMIPDNYVELDVENARKALKLIDALENSDDVQAVYSNMDMSESVMSVLEEE.

This sequence belongs to the TACO1 family.

It localises to the cytoplasm. This Chlorobaculum tepidum (strain ATCC 49652 / DSM 12025 / NBRC 103806 / TLS) (Chlorobium tepidum) protein is Probable transcriptional regulatory protein CT1665.